Reading from the N-terminus, the 134-residue chain is UPF0412 protein YaaI (134 aa).

A signal peptide spans Met-1–Ala-23.

The protein belongs to the UPF0412 family.

The chain is UPF0412 protein YaaI from Escherichia coli (strain ATCC 8739 / DSM 1576 / NBRC 3972 / NCIMB 8545 / WDCM 00012 / Crooks).